The primary structure comprises 243 residues: Tegument protein UL14 homolog (243 aa).

Belongs to the alphaherpesvirinae HHV-1 UL14 protein family. Phosphorylated.

It is found in the virion tegument. The protein localises to the host cytoplasm. Its subcellular location is the host nucleus. Its function is as follows. Contributes to the nuclear transport of the viral transcriptional activator VP16 homolog during the early phase of infection. Therefore, participates indirectly in the regulation of the immediate-early gene expression. Additionally, seems to be important for efficient nuclear targeting of capsids. The chain is Tegument protein UL14 homolog (MDV026) from Gallid herpesvirus 2 (strain Chicken/Md5/ATCC VR-987) (GaHV-2).